A 262-amino-acid chain; its full sequence is Ribose-5-phosphate isomerase A (262 aa).

Residues 33–36 (TGST), 89–92 (DGAD), and 102–105 (KGGG) contribute to the substrate site. Residue glutamate 111 is the Proton acceptor of the active site. Lysine 129 contacts substrate.

It belongs to the ribose 5-phosphate isomerase family. Homodimer.

The enzyme catalyses aldehydo-D-ribose 5-phosphate = D-ribulose 5-phosphate. It functions in the pathway carbohydrate degradation; pentose phosphate pathway; D-ribose 5-phosphate from D-ribulose 5-phosphate (non-oxidative stage): step 1/1. In terms of biological role, catalyzes the reversible conversion of ribose-5-phosphate to ribulose 5-phosphate. The polypeptide is Ribose-5-phosphate isomerase A (Cereibacter sphaeroides (strain ATCC 17029 / ATH 2.4.9) (Rhodobacter sphaeroides)).